The primary structure comprises 1295 residues: Phosphoribosylformylglycinamidine synthase (1295 aa).

The tract at residues 305-327 is disordered; the sequence is WPGAATGSGGEIRDEGATGRGAK. ATP is bound by residues 307–318, 386–388, and alanine 678; these read GAATGSGGEIRD and TGY. Residues aspartate 679, glutamate 718, asparagine 722, and aspartate 884 each coordinate Mg(2+). ATP is bound at residue serine 886. The Glutamine amidotransferase type-1 domain maps to 1042-1295; it reads VAVLREQGVN…IFRNARKQLG (254 aa). Cysteine 1135 (nucleophile) is an active-site residue. Residues histidine 1260 and glutamate 1262 contribute to the active site.

In the N-terminal section; belongs to the FGAMS family. Monomer.

The protein localises to the cytoplasm. It catalyses the reaction N(2)-formyl-N(1)-(5-phospho-beta-D-ribosyl)glycinamide + L-glutamine + ATP + H2O = 2-formamido-N(1)-(5-O-phospho-beta-D-ribosyl)acetamidine + L-glutamate + ADP + phosphate + H(+). Its pathway is purine metabolism; IMP biosynthesis via de novo pathway; 5-amino-1-(5-phospho-D-ribosyl)imidazole from N(2)-formyl-N(1)-(5-phospho-D-ribosyl)glycinamide: step 1/2. Its function is as follows. Phosphoribosylformylglycinamidine synthase involved in the purines biosynthetic pathway. Catalyzes the ATP-dependent conversion of formylglycinamide ribonucleotide (FGAR) and glutamine to yield formylglycinamidine ribonucleotide (FGAM) and glutamate. This chain is Phosphoribosylformylglycinamidine synthase, found in Salmonella typhi.